The primary structure comprises 452 residues: Keratin, type I cytoskeletal 15 (452 aa).

A head region spans residues 1 to 97; the sequence is MATTFLQTSS…GGDGGLLSGN (97 aa). A phosphoserine mark is found at Ser15, Ser16, Ser28, Ser33, and Ser47. The segment at 98–133 is coil 1A; that stretch reads EKVTMQNLNDRLASYLDKVRALEQANTELEVKIRDW. Positions 98-410 constitute an IF rod domain; that stretch reads EKVTMQNLND…NLLEGQDAKM (313 aa). Position 124 is a phosphothreonine (Thr124). The interval 134 to 152 is linker 1; the sequence is YQKQSPASPDRDYSHYFKT. Positions 153–244 are coil 1B; sequence MEEIRDKILA…KNHEEEMKEF (92 aa). Residues 245–264 are linker 12; that stretch reads SSQLAGQVNVEMDAAPGVDL. A coil 2 region spans residues 265–406; it reads TRMLAEMREQ…ATYRNLLEGQ (142 aa). Lys293 is covalently cross-linked (Glycyl lysine isopeptide (Lys-Gly) (interchain with G-Cter in SUMO2)). Phosphothreonine is present on residues Thr294 and Thr316. Positions 407–452 are tail; it reads DAKMAGIGVREGSSGGGGSSSSSSNFHISVEESVDGKVVSSRKREI. Positions 413–452 are disordered; the sequence is IGVREGSSGGGGSSSSSSNFHISVEESVDGKVVSSRKREI. A Glycyl lysine isopeptide (Lys-Gly) (interchain with G-Cter in SUMO1); alternate cross-link involves residue Lys443. Lys443 participates in a covalent cross-link: Glycyl lysine isopeptide (Lys-Gly) (interchain with G-Cter in SUMO2); alternate.

The protein belongs to the intermediate filament family. Heterotetramer of two type I and two type II keratins. Forms a heterodimer with KRT14. Interacts with PLEC isoform 1C, when in a heterodimer with KRT14. Interacts with NOD2. As to expression, expressed strongly in the basal cell layer at the tips of rete-like prominences (RLPs) of adult dorsal tongue, outer root sheath (ORS) of hair follicle and skin epidermis (at protein level).

In terms of biological role, in the absence of KRT14, makes a bona fide, but ultrastructurally distinct keratin filament network with KRT5. This chain is Keratin, type I cytoskeletal 15 (Krt15), found in Mus musculus (Mouse).